The sequence spans 237 residues: Ribose-5-phosphate isomerase A (237 aa).

Substrate-binding positions include 33–36, 88–91, and 101–104; these read TGST, DGAD, and KGRG. Glutamate 110 acts as the Proton acceptor in catalysis. Lysine 128 is a binding site for substrate.

This sequence belongs to the ribose 5-phosphate isomerase family. As to quaternary structure, homodimer.

The enzyme catalyses aldehydo-D-ribose 5-phosphate = D-ribulose 5-phosphate. It functions in the pathway carbohydrate degradation; pentose phosphate pathway; D-ribose 5-phosphate from D-ribulose 5-phosphate (non-oxidative stage): step 1/1. Functionally, catalyzes the reversible conversion of ribose-5-phosphate to ribulose 5-phosphate. The sequence is that of Ribose-5-phosphate isomerase A from Methanoregula boonei (strain DSM 21154 / JCM 14090 / 6A8).